Here is a 117-residue protein sequence, read N- to C-terminus: Large ribosomal subunit protein uL18 (117 aa).

It belongs to the universal ribosomal protein uL18 family. In terms of assembly, part of the 50S ribosomal subunit; part of the 5S rRNA/L5/L18/L25 subcomplex. Contacts the 5S and 23S rRNAs.

Functionally, this is one of the proteins that bind and probably mediate the attachment of the 5S RNA into the large ribosomal subunit, where it forms part of the central protuberance. The protein is Large ribosomal subunit protein uL18 of Leuconostoc mesenteroides subsp. mesenteroides (strain ATCC 8293 / DSM 20343 / BCRC 11652 / CCM 1803 / JCM 6124 / NCDO 523 / NBRC 100496 / NCIMB 8023 / NCTC 12954 / NRRL B-1118 / 37Y).